Consider the following 221-residue polypeptide: Endonuclease segA (221 aa).

Residues 8 to 91 (KYNYTYVITN…VVNDPMTYNL (84 aa)) form the GIY-YIG domain. The disordered stretch occupies residues 137-164 (KKQSEETKAKRKEALLNNPYGYNRNKPS). The span at 138 to 150 (KQSEETKAKRKEA) shows a compositional bias: basic and acidic residues.

To endonucleases of group I introns of fungi and phage. The cofactor is Mg(2+).

Its function is as follows. Probably involved in the movement of the endonuclease-encoding DNA. The sequence is that of Endonuclease segA (segA) from Escherichia coli (Bacteriophage T4).